A 132-amino-acid chain; its full sequence is Mini-ribonuclease 3 (132 aa).

Asp-17 is a catalytic residue.

It belongs to the MrnC RNase family. As to quaternary structure, homodimer. The cofactor is Mg(2+).

The protein localises to the cytoplasm. Functionally, involved in correct processing of both the 5' and 3' ends of 23S rRNA precursor. Processes 30S rRNA precursor transcript even in absence of ribonuclease 3 (Rnc); Rnc processes 30S rRNA into smaller rRNA precursors. The polypeptide is Mini-ribonuclease 3 (Enterococcus faecalis (strain ATCC 700802 / V583)).